Here is a 690-residue protein sequence, read N- to C-terminus: Peroxidase (690 aa).

Positions 1–20 (MIRARDLLLLALLGFISSAL) are cleaved as a signal peptide. A disulfide bridge links C100 with C112. The Proton acceptor role is filled by H185. N310 is a glycosylation site (N-linked (GlcNAc...) asparagine). A disulfide bridge links C315 with C324. H437 serves as a coordination point for heme b. Intrachain disulfides connect C536/C592 and C636/C662.

The protein belongs to the peroxidase family. XPO subfamily. Heme b is required as a cofactor.

The protein localises to the secreted. The catalysed reaction is 2 a phenolic donor + H2O2 = 2 a phenolic radical donor + 2 H2O. In terms of biological role, involved in the chorion hardening process, through protein cross-linking mediated by the formation of di- and tri-tyrosine bonds. The polypeptide is Peroxidase (Pxd) (Drosophila melanogaster (Fruit fly)).